Here is a 476-residue protein sequence, read N- to C-terminus: MSTQRLRNEDYHDYSSTDVSPEESPSEGLNNLSSPGSYQRFGQSNSTTWFQTLIHLLKGNIGTGLLGLPLAVKNAGIVMGPISLLIIGIVAVHCMGILVKCAHHFCRRLNKSFVDYGDTVMYGLESSPCSWLRNHAHWGRRVVDFFLIVTQLGFCCVYFVFLADNFKQVIEAANGTTNNCHNNETVILTPTMDSRLYMLSFLPFLVLLVFIRNLRALSIFSLLANITMLVSLVMIYQFIVQRIPDPSHLPLVAPWKTYPLFFGTAIFSFEGIGMVLPLENKMKDPRKFPLILYLGMVIVTILYISLGCLGYLQFGANIQGSITLNLPNCWLYQSVKLLYSIGIFFTYALQFYVPAEIIIPFFVSRAPEHCELVVDLFVRTVLVCLTCILAILIPRLDLVISLVGSVSSSALALIIPPLLEVTTFYSEGMSPLTIFKDALISILGFVGFVVGTYEALYELIQPSNAPIFINSTCAFI.

Residues 1–15 are compositionally biased toward basic and acidic residues; sequence MSTQRLRNEDYHDYS. A disordered region spans residues 1–32; sequence MSTQRLRNEDYHDYSSTDVSPEESPSEGLNNL. Over 1–51 the chain is Cytoplasmic; the sequence is MSTQRLRNEDYHDYSSTDVSPEESPSEGLNNLSSPGSYQRFGQSNSTTWFQ. The chain crosses the membrane as a helical span at residues 52 to 72; the sequence is TLIHLLKGNIGTGLLGLPLAV. The Extracellular segment spans residues 73-78; that stretch reads KNAGIV. The chain crosses the membrane as a helical span at residues 79 to 99; that stretch reads MGPISLLIIGIVAVHCMGILV. At 100–141 the chain is on the cytoplasmic side; sequence KCAHHFCRRLNKSFVDYGDTVMYGLESSPCSWLRNHAHWGRR. The chain crosses the membrane as a helical span at residues 142 to 162; that stretch reads VVDFFLIVTQLGFCCVYFVFL. Over 163–190 the chain is Extracellular; sequence ADNFKQVIEAANGTTNNCHNNETVILTP. N-linked (GlcNAc...) asparagine glycosylation is found at Asn-174 and Asn-183. Cysteines 180 and 329 form a disulfide. The helical transmembrane segment at 191–211 threads the bilayer; that stretch reads TMDSRLYMLSFLPFLVLLVFI. Topologically, residues 212–215 are cytoplasmic; sequence RNLR. A helical transmembrane segment spans residues 216-236; sequence ALSIFSLLANITMLVSLVMIY. Topologically, residues 237–257 are extracellular; the sequence is QFIVQRIPDPSHLPLVAPWKT. The chain crosses the membrane as a helical span at residues 258–278; it reads YPLFFGTAIFSFEGIGMVLPL. Residues 279–289 are Cytoplasmic-facing; the sequence is ENKMKDPRKFP. Residues 290-310 form a helical membrane-spanning segment; sequence LILYLGMVIVTILYISLGCLG. Residues 311–342 are Extracellular-facing; sequence YLQFGANIQGSITLNLPNCWLYQSVKLLYSIG. The chain crosses the membrane as a helical span at residues 343–363; sequence IFFTYALQFYVPAEIIIPFFV. The Cytoplasmic segment spans residues 364-372; sequence SRAPEHCEL. The chain crosses the membrane as a helical span at residues 373 to 393; the sequence is VVDLFVRTVLVCLTCILAILI. Over 394 to 397 the chain is Extracellular; that stretch reads PRLD. Residues 398–418 form a helical membrane-spanning segment; that stretch reads LVISLVGSVSSSALALIIPPL. At 419–439 the chain is on the cytoplasmic side; that stretch reads LEVTTFYSEGMSPLTIFKDAL. The helical transmembrane segment at 440-460 threads the bilayer; sequence ISILGFVGFVVGTYEALYELI. The Extracellular portion of the chain corresponds to 461-476; the sequence is QPSNAPIFINSTCAFI. The N-linked (GlcNAc...) asparagine glycan is linked to Asn-470.

Belongs to the amino acid/polyamine transporter 2 family.

It localises to the cell membrane. The protein resides in the apical cell membrane. The protein localises to the lysosome membrane. It carries out the reaction glycine(in) + H(+)(in) = glycine(out) + H(+)(out). The enzyme catalyses L-alanine(in) + H(+)(in) = L-alanine(out) + H(+)(out). It catalyses the reaction D-alanine(in) + H(+)(in) = D-alanine(out) + H(+)(out). The catalysed reaction is L-proline(out) + H(+)(out) = L-proline(in) + H(+)(in). It carries out the reaction D-proline(out) + H(+)(out) = D-proline(in) + H(+)(in). The enzyme catalyses D-serine(out) + H(+)(out) = D-serine(in) + H(+)(in). It catalyses the reaction L-serine(in) + H(+)(in) = L-serine(out) + H(+)(out). The catalysed reaction is 4-aminobutanoate(in) + H(+)(in) = 4-aminobutanoate(out) + H(+)(out). It carries out the reaction beta-alanine(in) + H(+)(in) = beta-alanine(out) + H(+)(out). Electrogenic proton/amino acid symporter with selectivity for small apolar L-amino acids, their D-enantiomers and selected amino acid derivatives such as 4-aminobutanoate/GABA. May be involved in the efflux from the lysosomal compartment of neutral amino acids resulting from proteolysis. May play a role in specifying sites for exocytosis in neurons. The protein is Proton-coupled amino acid transporter 1 of Homo sapiens (Human).